We begin with the raw amino-acid sequence, 102 residues long: UPF0213 protein XCC3072 (102 aa).

In terms of domain architecture, GIY-YIG spans 5–80; it reads KPWHLYLLLC…KQQPRARKLA (76 aa).

The protein belongs to the UPF0213 family.

The sequence is that of UPF0213 protein XCC3072 from Xanthomonas campestris pv. campestris (strain ATCC 33913 / DSM 3586 / NCPPB 528 / LMG 568 / P 25).